Reading from the N-terminus, the 126-residue chain is Fluoride-specific ion channel FluC (126 aa).

4 consecutive transmembrane segments (helical) span residues 4–24, 35–55, 68–88, and 103–123; these read SILAVGIGGALGSLFRWFLGI, LGTFAANVIAGYVIGVAVAGF, FVITGLMGGLSTFSTFSAEVV, and IVIHVGASLVMTILGIATVSL. The Na(+) site is built by Gly-75 and Ser-78.

Belongs to the fluoride channel Fluc/FEX (TC 1.A.43) family.

The protein resides in the cell inner membrane. The enzyme catalyses fluoride(in) = fluoride(out). Na(+) is not transported, but it plays an essential structural role and its presence is essential for fluoride channel function. Functionally, fluoride-specific ion channel. Important for reducing fluoride concentration in the cell, thus reducing its toxicity. In Paraburkholderia xenovorans (strain LB400), this protein is Fluoride-specific ion channel FluC.